The primary structure comprises 250 residues: Adenosylcobinamide-GDP ribazoletransferase (250 aa).

6 helical membrane passes run I33–I53, I63–G83, L109–T129, L137–I157, F180–F200, and I203–G223.

Belongs to the CobS family. Requires Mg(2+) as cofactor.

The protein resides in the cell membrane. It catalyses the reaction alpha-ribazole + adenosylcob(III)inamide-GDP = adenosylcob(III)alamin + GMP + H(+). It carries out the reaction alpha-ribazole 5'-phosphate + adenosylcob(III)inamide-GDP = adenosylcob(III)alamin 5'-phosphate + GMP + H(+). The protein operates within cofactor biosynthesis; adenosylcobalamin biosynthesis; adenosylcobalamin from cob(II)yrinate a,c-diamide: step 7/7. Functionally, joins adenosylcobinamide-GDP and alpha-ribazole to generate adenosylcobalamin (Ado-cobalamin). Also synthesizes adenosylcobalamin 5'-phosphate from adenosylcobinamide-GDP and alpha-ribazole 5'-phosphate. The sequence is that of Adenosylcobinamide-GDP ribazoletransferase from Thermoanaerobacter sp. (strain X514).